We begin with the raw amino-acid sequence, 244 residues long: 14-3-3 protein beta/alpha-1 (244 aa).

Met-1 carries the post-translational modification N-acetylmethionine.

The protein belongs to the 14-3-3 family. In terms of assembly, homodimer, and heterodimer with other family members. In terms of tissue distribution, expressed in brain, gill, heart, intestine, kidney, liver, ovary, skin, spleen and testis.

Its subcellular location is the cytoplasm. Functionally, adapter protein implicated in the regulation of a large spectrum of both general and specialized signaling pathways. Binds to a large number of partners, usually by recognition of a phosphoserine or phosphothreonine motif. Binding generally results in the modulation of the activity of the binding partner. The sequence is that of 14-3-3 protein beta/alpha-1 from Oncorhynchus mykiss (Rainbow trout).